A 515-amino-acid chain; its full sequence is 2,3-bisphosphoglycerate-independent phosphoglycerate mutase (515 aa).

Mn(2+)-binding residues include D14 and S64. The active-site Phosphoserine intermediate is S64. Residues H125, R155–D156, R187, R193, R263–R266, and K337 each bind substrate. Mn(2+)-binding residues include D404, H408, D445, H446, and H464.

Belongs to the BPG-independent phosphoglycerate mutase family. Monomer. Mn(2+) is required as a cofactor.

It catalyses the reaction (2R)-2-phosphoglycerate = (2R)-3-phosphoglycerate. Its pathway is carbohydrate degradation; glycolysis; pyruvate from D-glyceraldehyde 3-phosphate: step 3/5. Its function is as follows. Catalyzes the interconversion of 2-phosphoglycerate and 3-phosphoglycerate. This chain is 2,3-bisphosphoglycerate-independent phosphoglycerate mutase, found in Yersinia pseudotuberculosis serotype I (strain IP32953).